A 312-amino-acid chain; its full sequence is Ribosomal protein L11 methyltransferase (312 aa).

S-adenosyl-L-methionine contacts are provided by Thr-159, Gly-180, Asp-201, and Asn-244.

It belongs to the methyltransferase superfamily. PrmA family.

The protein resides in the cytoplasm. It catalyses the reaction L-lysyl-[protein] + 3 S-adenosyl-L-methionine = N(6),N(6),N(6)-trimethyl-L-lysyl-[protein] + 3 S-adenosyl-L-homocysteine + 3 H(+). Methylates ribosomal protein L11. This is Ribosomal protein L11 methyltransferase from Desulfitobacterium hafniense (strain DSM 10664 / DCB-2).